The following is a 326-amino-acid chain: Glutaredoxin 3 (326 aa).

The Thioredoxin domain maps to 1 to 108; sequence MANFTDAASL…LTNKVQRLGS (108 aa). 2 consecutive Glutaredoxin domains span residues 125 to 227 and 227 to 326; these read NQRL…VSLE and ENRL…KGEN. The [2Fe-2S] cluster site is built by cysteine 150 and cysteine 252.

Homodimer; the homodimer is independent of 2Fe-2S clusters. Heterotrimer; forms a heterotrimeric complex composed by two bola2 molecules and one glrx3 molecule; linked by [2Fe-2S] clusters.

Its subcellular location is the cytoplasm. The protein resides in the cytosol. Together with bola2, acts as a cytosolic iron-sulfur (Fe-S) cluster assembly factor that facilitates [2Fe-2S] cluster insertion into a subset of cytosolic proteins. Required for hemoglobin maturation. Does not possess any thyoredoxin activity since it lacks the conserved motif that is essential for catalytic activity. The polypeptide is Glutaredoxin 3 (glrx3) (Danio rerio (Zebrafish)).